We begin with the raw amino-acid sequence, 223 residues long: MKFAVLVFPGSNCDRDMFNAAIKSGVEAEYVDYRETSLSGFDGVLIPGGFSFGDYLRSGAMASVAPIISEVKRLAAEGKPVLGVCNGFQILTEIGLLPGALLHNDSHLFISRNEELEIVNNQTAFTNLYEQGEKVIYPVAHGEGHYYCTDEIYQQLKANNQIILKYVNNPNGSYDDIAGIVNEKGNVCGMMPHPERALETLLGTDSGVKLFEAMVKSWREQHV.

Positions 3-223 constitute a Glutamine amidotransferase type-1 domain; sequence FAVLVFPGSN…MVKSWREQHV (221 aa). Residue Cys85 is the Nucleophile of the active site. Active-site residues include His193 and Glu195.

As to quaternary structure, part of the FGAM synthase complex composed of 1 PurL, 1 PurQ and 2 PurS subunits.

It localises to the cytoplasm. It carries out the reaction N(2)-formyl-N(1)-(5-phospho-beta-D-ribosyl)glycinamide + L-glutamine + ATP + H2O = 2-formamido-N(1)-(5-O-phospho-beta-D-ribosyl)acetamidine + L-glutamate + ADP + phosphate + H(+). The enzyme catalyses L-glutamine + H2O = L-glutamate + NH4(+). The protein operates within purine metabolism; IMP biosynthesis via de novo pathway; 5-amino-1-(5-phospho-D-ribosyl)imidazole from N(2)-formyl-N(1)-(5-phospho-D-ribosyl)glycinamide: step 1/2. In terms of biological role, part of the phosphoribosylformylglycinamidine synthase complex involved in the purines biosynthetic pathway. Catalyzes the ATP-dependent conversion of formylglycinamide ribonucleotide (FGAR) and glutamine to yield formylglycinamidine ribonucleotide (FGAM) and glutamate. The FGAM synthase complex is composed of three subunits. PurQ produces an ammonia molecule by converting glutamine to glutamate. PurL transfers the ammonia molecule to FGAR to form FGAM in an ATP-dependent manner. PurS interacts with PurQ and PurL and is thought to assist in the transfer of the ammonia molecule from PurQ to PurL. This is Phosphoribosylformylglycinamidine synthase subunit PurQ from Staphylococcus aureus (strain USA300).